A 448-amino-acid chain; its full sequence is Gametocyte surface protein P45/48 (448 aa).

The N-terminal stretch at 1-27 (MMLYISAKKAQVAFILYIVLVLRIISG) is a signal peptide. The 6-Cys 1 domain occupies 45–182 (IGYKCNFSNE…AMVHVRVLKY (138 aa)). Disulfide bonds link cysteine 49-cysteine 71 and cysteine 102-cysteine 156. Asparagine 50, asparagine 131, asparagine 190, asparagine 204, asparagine 254, asparagine 299, and asparagine 303 each carry an N-linked (GlcNAc...) asparagine glycan. Residues 294-426 (VIHGCNFSSN…KSAYMTVTID (133 aa)) form the 6-Cys 2 domain. Intrachain disulfides connect cysteine 298–cysteine 327, cysteine 344–cysteine 412, and cysteine 352–cysteine 410. Aspartate 426 carries the GPI-anchor amidated aspartate lipid modification. The propeptide at 427–448 (SAYYGFLAKTFIFLIVAILLYI) is removed in mature form.

In terms of assembly, heterodimer; heterodimerizes with PF230.

The protein localises to the cell surface. Its subcellular location is the cell membrane. Its function is as follows. Gametocyte surface protein required for male fertility. The polypeptide is Gametocyte surface protein P45/48 (PF45/48) (Plasmodium falciparum (isolate 3D7)).